The sequence spans 298 residues: tRNA (guanine(9)-N1)-methyltransferase (298 aa).

Positions 1–10 are enriched in polar residues; it reads MSDTSENSNA. Residues 1–44 are disordered; sequence MSDTSENSNAEIPADTSDVKDKPKPIVRAPQFPPPPEGISKSQW. The SAM-dependent MTase TRM10-type domain occupies 96–285; it reads PPKVNLNQSD…SVLPPRKLEV (190 aa). Residues 192–193, Gly-212, 216–220, Cys-224, Leu-238, and 250–252 contribute to the S-adenosyl-L-methionine site; these read LT, DKNRH, and KVL. Asp-216 serves as the catalytic Proton acceptor.

It belongs to the class IV-like SAM-binding methyltransferase superfamily. TRM10 family. As to quaternary structure, monomer.

The protein resides in the cytoplasm. It localises to the nucleus. The catalysed reaction is guanosine(9) in tRNA + S-adenosyl-L-methionine = N(1)-methylguanosine(9) in tRNA + S-adenosyl-L-homocysteine + H(+). Its function is as follows. S-adenosyl-L-methionine-dependent guanine N(1)-methyltransferase that catalyzes the formation of N(1)-methylguanine at position 9 (m1G9) in cytoplasmic tRNA. This chain is tRNA (guanine(9)-N1)-methyltransferase, found in Kluyveromyces lactis (strain ATCC 8585 / CBS 2359 / DSM 70799 / NBRC 1267 / NRRL Y-1140 / WM37) (Yeast).